The following is a 407-amino-acid chain: Putative serine/threonine-protein kinase C01C4.3 (407 aa).

Over residues 33-57 the composition is skewed to polar residues; it reads NQLQNHPPRNATQSPQRQPRTSESS. Residues 33 to 68 are disordered; that stretch reads NQLQNHPPRNATQSPQRQPRTSESSMDFPRSALRRN. Residues 126–397 form the Protein kinase domain; that stretch reads YTVNKQLGTG…RKCLAKEKLL (272 aa). Residues 132–140 and K155 each bind ATP; that span reads LGTGRFGFI. Catalysis depends on N251, which acts as the Proton acceptor.

It belongs to the protein kinase superfamily. Ser/Thr protein kinase family.

It catalyses the reaction L-seryl-[protein] + ATP = O-phospho-L-seryl-[protein] + ADP + H(+). The catalysed reaction is L-threonyl-[protein] + ATP = O-phospho-L-threonyl-[protein] + ADP + H(+). The polypeptide is Putative serine/threonine-protein kinase C01C4.3 (Caenorhabditis elegans).